Here is a 336-residue protein sequence, read N- to C-terminus: Ribosomal RNA small subunit methyltransferase C (336 aa).

Belongs to the methyltransferase superfamily. RsmC family. Monomer.

It is found in the cytoplasm. It carries out the reaction guanosine(1207) in 16S rRNA + S-adenosyl-L-methionine = N(2)-methylguanosine(1207) in 16S rRNA + S-adenosyl-L-homocysteine + H(+). In terms of biological role, specifically methylates the guanine in position 1207 of 16S rRNA in the 30S particle. In Buchnera aphidicola subsp. Schizaphis graminum (strain Sg), this protein is Ribosomal RNA small subunit methyltransferase C.